The chain runs to 398 residues: Cholinephosphotransferase 1 (398 aa).

Alanine 2 bears the N-acetylalanine mark. Residues 2 to 62 (AAGAGARPAP…LLQWIPLWMA (61 aa)) lie on the Cytoplasmic side of the membrane. The chain crosses the membrane as a helical span at residues 63–83 (PNTITLIGLAINLVTTLVLIF). A CDP-choline-binding site is contributed by asparagine 64. Over 84–93 (YCPTVTEEAP) the chain is Lumenal. The chain crosses the membrane as a helical span at residues 94 to 118 (YWTYLLCALGLFIYQSLDAIDGKQA). Residues aspartate 111 and aspartate 114 each coordinate Mg(2+). Position 119 (arginine 119) interacts with CDP-choline. At 119–125 (RRTNSCS) the chain is on the cytoplasmic side. A helical transmembrane segment spans residues 126 to 150 (PLGELFDHGCDSLSTVFMAIGASIA). Mg(2+) is bound at residue aspartate 132. Histidine 133 functions as the Proton acceptor in the catalytic mechanism. A Mg(2+)-binding site is contributed by aspartate 136. The Lumenal portion of the chain corresponds to 151–160 (VRLGTHPDWL). A helical membrane pass occupies residues 161–179 (FFCSFVGMFMFYCAHWQTY). The Cytoplasmic portion of the chain corresponds to 180–190 (VSGVLRFGRVD). The chain crosses the membrane as a helical span at residues 191 to 207 (VTEIQVALVIVFMLSTF). The Lumenal segment spans residues 208–222 (GGATMWDYTIPILEI). A helical transmembrane segment spans residues 223-248 (KLKIVPVLGVVGGLIFSCSNYFHVIL). At 249 to 265 (HGGVGKNGSTIAGTSVL) the chain is on the cytoplasmic side. Residues 266–281 (SPGLHIGLIIILAIMI) traverse the membrane as a helical segment. The Lumenal segment spans residues 282–293 (YKKSATNMFEKH). Residues 294–316 (PCLYTLMFGCVFAKVAQKLVIAH) traverse the membrane as a helical segment. At 317–329 (MTKSELYLQDTVF) the chain is on the cytoplasmic side. Residues 330-339 (IGPGLLFLDQ) form a helical membrane-spanning segment. Residues 340–346 (YFNNFID) lie on the Lumenal side of the membrane. Residues 347–376 (EYVVLWIAMVISSFDMMIYFTSLCLQISRH) form a helical membrane-spanning segment. The Cytoplasmic segment spans residues 377–398 (LHLNIFKTSCQQAPEQVYKHID).

The protein belongs to the CDP-alcohol phosphatidyltransferase class-I family. Mg(2+) serves as cofactor. Requires Mn(2+) as cofactor. Expressed in brain, heart, lung, liver, spleen, intestine and muscle. Down-regulated in kidney of type 2 diabetic KK/Ta mice.

It is found in the golgi apparatus membrane. The enzyme catalyses CDP-choline + a 1,2-diacyl-sn-glycerol = a 1,2-diacyl-sn-glycero-3-phosphocholine + CMP + H(+). The catalysed reaction is 1-octadecanoyl-2-(5Z,8Z,11Z,14Z-eicosatetraenoyl)-sn-glycerol + CDP-choline = 1-octadecanoyl-2-(5Z,8Z,11Z,14Z-eicosatetraenoyl)-sn-glycero-3-phosphocholine + CMP + H(+). It carries out the reaction 1-hexadecanoyl-2-(9Z-octadecenoyl)-sn-glycerol + CDP-choline = 1-hexadecanoyl-2-(9Z-octadecenoyl)-sn-glycero-3-phosphocholine + CMP + H(+). It catalyses the reaction 1-hexadecanoyl-2-(4Z,7Z,10Z,13Z,16Z,19Z-docosahexaenoyl)-sn-glycerol + CDP-choline = 1-hexadecanoyl-2-(4Z,7Z,10Z,13Z,16Z,19Z-docosahexaenoyl)-sn-glycero-3-phosphocholine + CMP + H(+). The enzyme catalyses 1,2-dioctanoyl-sn-glycerol + CDP-choline = 1,2-dioctanoyl-sn-glycero-3-phosphocholine + CMP + H(+). It functions in the pathway phospholipid metabolism; phosphatidylcholine biosynthesis; phosphatidylcholine from phosphocholine: step 2/2. In terms of biological role, catalyzes the final step of de novo phosphatidylcholine (PC) synthesis, i.e. the transfer of choline phosphate from CDP-choline to the free hydroxyl of a diacylglycerol (DAG), producing a PC. It thereby plays a central role in the formation and maintenance of vesicular membranes. The sequence is that of Cholinephosphotransferase 1 from Mus musculus (Mouse).